We begin with the raw amino-acid sequence, 431 residues long: Levansucrase LscC (431 aa).

Sucrose is bound by residues tryptophan 61, aspartate 62, alanine 148, arginine 218, and aspartate 219. Residue aspartate 62 is the Nucleophile of the active site. Glutamate 303 acts as the Proton donor/acceptor in catalysis.

This sequence belongs to the glycosyl hydrolase 68 family.

It localises to the periplasm. The catalysed reaction is [6)-beta-D-fructofuranosyl-(2-&gt;](n) alpha-D-glucopyranoside + sucrose = [6)-beta-D-fructofuranosyl-(2-&gt;](n+1) alpha-D-glucopyranoside + D-glucose. Its function is as follows. Catalyzes the synthesis of levan, a fructose polymer, by transferring the fructosyl moiety from sucrose to a growing acceptor molecule. In Pseudomonas savastanoi pv. glycinea (Pseudomonas syringae pv. glycinea), this protein is Levansucrase LscC.